The following is a 119-amino-acid chain: Mitochondrial zinc maintenance protein 1, mitochondrial (119 aa).

Residues Met1 to Leu15 constitute a mitochondrion transit peptide.

It belongs to the complex I LYR family. MZM1 subfamily. As to quaternary structure, interacts with RIP1.

The protein localises to the mitochondrion matrix. In terms of biological role, assembly factor required for Rieske Fe-S protein RIP1 incorporation into the cytochrome b-c1 (CIII) complex. Functions as a chaperone, binding to this subunit within the mitochondrial matrix and stabilizing it prior to its translocation and insertion into the late CIII dimeric intermediate within the mitochondrial inner membrane. Modulates the mitochondrial matrix zinc pool. The chain is Mitochondrial zinc maintenance protein 1, mitochondrial (MZM1) from Eremothecium gossypii (strain ATCC 10895 / CBS 109.51 / FGSC 9923 / NRRL Y-1056) (Yeast).